We begin with the raw amino-acid sequence, 278 residues long: 4-diphosphocytidyl-2-C-methyl-D-erythritol kinase (278 aa).

Lys9 is an active-site residue. ATP is bound at residue 93-103; that stretch reads PLGGGLGGGSS. Asp135 is a catalytic residue.

Belongs to the GHMP kinase family. IspE subfamily.

The catalysed reaction is 4-CDP-2-C-methyl-D-erythritol + ATP = 4-CDP-2-C-methyl-D-erythritol 2-phosphate + ADP + H(+). It participates in isoprenoid biosynthesis; isopentenyl diphosphate biosynthesis via DXP pathway; isopentenyl diphosphate from 1-deoxy-D-xylulose 5-phosphate: step 3/6. Functionally, catalyzes the phosphorylation of the position 2 hydroxy group of 4-diphosphocytidyl-2C-methyl-D-erythritol. In Nitrosomonas eutropha (strain DSM 101675 / C91 / Nm57), this protein is 4-diphosphocytidyl-2-C-methyl-D-erythritol kinase.